A 355-amino-acid chain; its full sequence is 3-dehydroquinate synthase (355 aa).

NAD(+) is bound by residues 71–76 (EGEASK), 105–109 (GVVGD), 129–130 (TS), lysine 142, lysine 151, and 169–172 (TLKT). Zn(2+) contacts are provided by glutamate 184, histidine 246, and histidine 263.

The protein belongs to the sugar phosphate cyclases superfamily. Dehydroquinate synthase family. Requires Co(2+) as cofactor. It depends on Zn(2+) as a cofactor. NAD(+) is required as a cofactor.

The protein localises to the cytoplasm. It catalyses the reaction 7-phospho-2-dehydro-3-deoxy-D-arabino-heptonate = 3-dehydroquinate + phosphate. It functions in the pathway metabolic intermediate biosynthesis; chorismate biosynthesis; chorismate from D-erythrose 4-phosphate and phosphoenolpyruvate: step 2/7. In terms of biological role, catalyzes the conversion of 3-deoxy-D-arabino-heptulosonate 7-phosphate (DAHP) to dehydroquinate (DHQ). The sequence is that of 3-dehydroquinate synthase from Streptococcus suis (strain 98HAH33).